Here is a 101-residue protein sequence, read N- to C-terminus: Small ribosomal subunit protein uS14 (101 aa).

Belongs to the universal ribosomal protein uS14 family. Part of the 30S ribosomal subunit. Contacts proteins S3 and S10.

Its function is as follows. Binds 16S rRNA, required for the assembly of 30S particles and may also be responsible for determining the conformation of the 16S rRNA at the A site. In Rhizobium etli (strain CIAT 652), this protein is Small ribosomal subunit protein uS14.